The sequence spans 185 residues: Segregation and condensation protein B (185 aa).

Belongs to the ScpB family. As to quaternary structure, homodimer. Homodimerization may be required to stabilize the binding of ScpA to the Smc head domains. Component of a cohesin-like complex composed of ScpA, ScpB and the Smc homodimer, in which ScpA and ScpB bind to the head domain of Smc. The presence of the three proteins is required for the association of the complex with DNA.

It is found in the cytoplasm. In terms of biological role, participates in chromosomal partition during cell division. May act via the formation of a condensin-like complex containing Smc and ScpA that pull DNA away from mid-cell into both cell halves. In Alkaliphilus oremlandii (strain OhILAs) (Clostridium oremlandii (strain OhILAs)), this protein is Segregation and condensation protein B.